A 339-amino-acid polypeptide reads, in one-letter code: NADH-quinone oxidoreductase subunit H (339 aa).

8 helical membrane passes run 9–29 (IFPL…LILC), 82–102 (ILFV…WAVI), 115–135 (VGVL…IIAG), 161–181 (MGLV…SQIV), 187–207 (MPWW…ISVL), 235–255 (MGFA…SAMT), 275–295 (IPGF…FLWI), and 311–331 (GWKV…SVLI).

It belongs to the complex I subunit 1 family. As to quaternary structure, NDH-1 is composed of 14 different subunits. Subunits NuoA, H, J, K, L, M, N constitute the membrane sector of the complex.

Its subcellular location is the cell inner membrane. It catalyses the reaction a quinone + NADH + 5 H(+)(in) = a quinol + NAD(+) + 4 H(+)(out). Functionally, NDH-1 shuttles electrons from NADH, via FMN and iron-sulfur (Fe-S) centers, to quinones in the respiratory chain. The immediate electron acceptor for the enzyme in this species is believed to be ubiquinone. Couples the redox reaction to proton translocation (for every two electrons transferred, four hydrogen ions are translocated across the cytoplasmic membrane), and thus conserves the redox energy in a proton gradient. This subunit may bind ubiquinone. In Rickettsia bellii (strain OSU 85-389), this protein is NADH-quinone oxidoreductase subunit H.